Consider the following 203-residue polypeptide: Proteasome subunit beta 2 (203 aa).

The propeptide at 1–9 (MGEEFQVGA) is removed in mature form; by autocatalysis. Threonine 10 functions as the Nucleophile in the catalytic mechanism.

This sequence belongs to the peptidase T1B family. As to quaternary structure, the 20S proteasome core is composed of 14 alpha and 14 beta subunits that assemble into four stacked heptameric rings, resulting in a barrel-shaped structure. The two inner rings, each composed of seven catalytic beta subunits, are sandwiched by two outer rings, each composed of seven alpha subunits. The catalytic chamber with the active sites is on the inside of the barrel. Has a gated structure, the ends of the cylinder being occluded by the N-termini of the alpha-subunits. Is capped at one or both ends by the proteasome regulatory ATPase, PAN.

It localises to the cytoplasm. It catalyses the reaction Cleavage of peptide bonds with very broad specificity.. The formation of the proteasomal ATPase PAN-20S proteasome complex, via the docking of the C-termini of PAN into the intersubunit pockets in the alpha-rings, triggers opening of the gate for substrate entry. Interconversion between the open-gate and close-gate conformations leads to a dynamic regulation of the 20S proteasome proteolysis activity. Its function is as follows. Component of the proteasome core, a large protease complex with broad specificity involved in protein degradation. The protein is Proteasome subunit beta 2 of Pyrobaculum neutrophilum (strain DSM 2338 / JCM 9278 / NBRC 100436 / V24Sta) (Thermoproteus neutrophilus).